A 49-amino-acid polypeptide reads, in one-letter code: Large ribosomal subunit protein bL33 (49 aa).

It belongs to the bacterial ribosomal protein bL33 family.

The chain is Large ribosomal subunit protein bL33 from Syntrophotalea carbinolica (strain DSM 2380 / NBRC 103641 / GraBd1) (Pelobacter carbinolicus).